The primary structure comprises 196 residues: Transcriptional regulatory protein UhpA (196 aa).

In terms of domain architecture, Response regulatory spans 3–116 (TVALIDDHLI…ELIAAVHTVA (114 aa)). A 4-aspartylphosphate modification is found at D54. In terms of domain architecture, HTH luxR-type spans 131–196 (ASGRQDPLTK…ELARRMFDGW (66 aa)). Residues 155 to 174 (VKEIAAELGLSPKTVHVHRA) constitute a DNA-binding region (H-T-H motif).

Phosphorylated and dephosphorylated by UhpB.

The protein resides in the cytoplasm. With respect to regulation, phosphorylation by UhpB enhances DNA binding activity. In terms of biological role, part of the UhpABC signaling cascade that controls the expression of the hexose phosphate transporter UhpT. Activates the transcription of the uhpT gene. Acts by binding specifically to the uhpT promoter region. The protein is Transcriptional regulatory protein UhpA (uhpA) of Escherichia coli (strain K12).